The primary structure comprises 261 residues: Ribonuclease HII (261 aa).

The 189-residue stretch at 71–259 (KYIAGVDEVG…VKEAKLHFDS (189 aa)) folds into the RNase H type-2 domain. Positions 77, 78, and 169 each coordinate a divalent metal cation.

The protein belongs to the RNase HII family. The cofactor is Mn(2+). Mg(2+) serves as cofactor.

Its subcellular location is the cytoplasm. The catalysed reaction is Endonucleolytic cleavage to 5'-phosphomonoester.. Endonuclease that specifically degrades the RNA of RNA-DNA hybrids. In Listeria monocytogenes serotype 4a (strain HCC23), this protein is Ribonuclease HII.